Here is a 749-residue protein sequence, read N- to C-terminus: Metabotropic glutamate receptor-like protein M (749 aa).

Residues 1–22 form the signal peptide; sequence MIKLILSLIFLIICCNINPSES. Residues 23 to 385 lie on the Extracellular side of the membrane; it reads FKLITLTTGP…KIEFSSSVQK (363 aa). Residues Asn-67, Asn-164, Asn-257, Asn-271, and Asn-345 are each glycosylated (N-linked (GlcNAc...) asparagine). Residues 386–406 form a helical membrane-spanning segment; that stretch reads GFSIVSGCLIAFVILMMVGIV. At 407-419 the chain is on the cytoplasmic side; the sequence is YYKDTPSIRSASP. A helical transmembrane segment spans residues 420–440; it reads IFLNFSLIGGIIIYIGIIIWV. Residues 441–456 lie on the Extracellular side of the membrane; that stretch reads GPISTHQCNARFWLVT. Residues 457–477 form a helical membrane-spanning segment; it reads LGFSTLIGSLVVKNFRIWLIF. Residues 478-492 lie on the Cytoplasmic side of the membrane; the sequence is DNPELKAIKITNYQL. A helical transmembrane segment spans residues 493–513; sequence FPWVGLCLVINIVLMAILTSV. At 514 to 544 the chain is on the extracellular side; that stretch reads GDLKAIEAQGIDSLGKYEYMTVCKMNSAGAS. A helical membrane pass occupies residues 545–565; the sequence is TLYSILAYFAALLLVGVFVSW. At 566 to 579 the chain is on the cytoplasmic side; it reads KIRIVDIEEFNESK. The helical transmembrane segment at 580–600 threads the bilayer; that stretch reads AIANTLYAVSFCLFVIVPLMI. Topologically, residues 601-609 are extracellular; sequence SPQEKQSET. The helical transmembrane segment at 610–630 threads the bilayer; that stretch reads IILCVAGLFITTAALLIVFIP. Residues 631 to 749 lie on the Cytoplasmic side of the membrane; that stretch reads KFWRVFIYGK…EEPVKTESQE (119 aa). The segment at 658–749 is disordered; it reads ARAESLSKNS…EEPVKTESQE (92 aa). The span at 698–716 shows a compositional bias: polar residues; it reads SSLSEPNKPTKNNDGNVNV. Residues 725-740 are compositionally biased toward acidic residues; sequence FTDDTISEFDENEVNE.

In the N-terminal section; belongs to the BMP lipoprotein family. It in the C-terminal section; belongs to the G-protein coupled receptor 3 family. GABA-B receptor subfamily.

It localises to the membrane. This is Metabotropic glutamate receptor-like protein M (grlM) from Dictyostelium discoideum (Social amoeba).